A 494-amino-acid chain; its full sequence is MRLTRCWAALAAAIILNLLVFFYVSWLQHQPRNSRARGPRRTSAIGPRVTVLIREFEAFDNAVPELVDSFLQQDPAQPVVVAADTLPYPPLALPRIPNVRLALLQPALDRPAAASRPETYVATEFVALVPDGARAESPGHLERMVEALRGSSARLVAAPVATANPARCLALNVSLREWTARYDPAPSAPRCDALDGDAVLLMRSRDLFNLSVPLARPLATSLFLQTALRGWAVQLLDLTFAAARQPPLATAHARWKAEREGRSRRAALLRSLGIRLVSWEGGRLEWFGCSKESARCFGTVAGDTPAYLYEGRWTPPCCLRALRETARYVVGVLEAAGVRYWLEGGSLLGAARHGDIIPWDYDVDLGIYLEDVGNCEQLRGAEAGSVVDERGFVWEKAVEGDFFRVQYSENNHLHVDLWPFYPRNGVMTKDTWLDHRQDVEFPEHFLQPLVPLPFAGFMAQAPNNYRRFLELKFGPGVIENPEYPNPALLSLTGG.

Over 1 to 6 (MRLTRC) the chain is Cytoplasmic. Residues 7–29 (WAALAAAIILNLLVFFYVSWLQH) form a helical membrane-spanning segment. Topologically, residues 30–494 (QPRNSRARGP…NPALLSLTGG (465 aa)) are lumenal. The cysteines at positions 168 and 191 are disulfide-linked. N-linked (GlcNAc...) asparagine glycans are attached at residues Asn172 and Asn209. Zn(2+) contacts are provided by Cys289, Cys296, Cys317, and Cys318. The interval 289–318 (CSKESARCFGTVAGDTPAYLYEGRWTPPCC) is zinc finger loop. Gly345 and Arg352 together coordinate CDP-L-ribitol. CDP-L-ribitol stretches follow at residues 359-364 (WDYDVD), 437-438 (QD), and 480-482 (NPE). 3 residues coordinate Mg(2+): Asp360, Asp362, and Asp364.

It belongs to the LicD transferase family. In terms of assembly, homodimer; disulfide-linked. Forms a complex composed of FKRP, FKTN/fukutin, and RXYLT1/TMEM5. Also exists as large multimeric protein complexes. May interact with the dystrophin-glycoprotein complex (DGC). Post-translationally, N-glycosylated. In terms of tissue distribution, expressed in the retina, specifically in the inner segments of the photoreceptors, the outer plexiform layers, inner nuclear layers, and ganglion cell layers (at protein level). Expressed at highest levels in brain, lung, heart, kidney and liver.

It localises to the golgi apparatus membrane. The protein resides in the secreted. The protein localises to the cell membrane. It is found in the sarcolemma. Its subcellular location is the rough endoplasmic reticulum. It localises to the cytoplasm. It carries out the reaction 3-O-[Rib-ol-P-3-beta-D-GalNAc-(1-&gt;3)-beta-D-GlcNAc-(1-&gt;4)-(O-6-P-alpha-D-Man)]-Thr-[protein] + CDP-L-ribitol = 3-O-[Rib-ol-P-Rib-ol-P-3-beta-D-GalNAc-(1-&gt;3)-beta-D-GlcNAc-(1-&gt;4)-(O-6-P-alpha-D-Man)]-Thr-[protein] + CMP + H(+). Its pathway is protein modification; protein glycosylation. Functionally, catalyzes the transfer of CDP-ribitol to ribitol 5-phosphate previously attached by FKTN/fukutin of to the phosphorylated O-mannosyl trisaccharide (N-acetylgalactosamine-beta-3-N-acetylglucosamine-beta-4-(phosphate-6-)mannose), a carbohydrate structure present in alpha-dystroglycan (DAG1). This constitutes the second step in the formation of the ribose 5-phosphate tandem repeat which links the phosphorylated O-mannosyl trisaccharide to the ligand binding moiety composed of repeats of 3-xylosyl-alpha-1,3-glucuronic acid-beta-1. This is Ribitol 5-phosphate transferase FKRP from Mus musculus (Mouse).